The sequence spans 600 residues: Aspartate--tRNA(Asp/Asn) ligase (600 aa).

Position 174 (E174) interacts with L-aspartate. The tract at residues 198–201 is aspartate; it reads QLFK. R220 lines the L-aspartate pocket. ATP is bound by residues 220–222 and Q229; that span reads RDE. H457 serves as a coordination point for L-aspartate. E491 serves as a coordination point for ATP. R498 lines the L-aspartate pocket. Residue 543-546 coordinates ATP; the sequence is GLDR.

It belongs to the class-II aminoacyl-tRNA synthetase family. Type 1 subfamily. Homodimer.

Its subcellular location is the cytoplasm. The enzyme catalyses tRNA(Asx) + L-aspartate + ATP = L-aspartyl-tRNA(Asx) + AMP + diphosphate. Its function is as follows. Aspartyl-tRNA synthetase with relaxed tRNA specificity since it is able to aspartylate not only its cognate tRNA(Asp) but also tRNA(Asn). Reaction proceeds in two steps: L-aspartate is first activated by ATP to form Asp-AMP and then transferred to the acceptor end of tRNA(Asp/Asn). This is Aspartate--tRNA(Asp/Asn) ligase from Burkholderia orbicola (strain MC0-3).